We begin with the raw amino-acid sequence, 501 residues long: MKYILSIDQGTTSSRAIVFDKHANIKGLAQKEFTQIYPQPSWVEHDPTEIWGSQLGVITEALANSRILPNEVDAIGITNQRETTVIWEKSTGKPIYNAIVWQDRRTAKICDQLTKEGKDKIILEKTGLVLDSYFSGTKILWILDNVEGARQKAENGELCFGTIDTWLLWNLTQKKVHATDYSNASRTLLLNIKTLEWDDELLKILNIPKAILPELKESSTIYGETDKSIFGAEIPIAGIAGDQFAATFGQACLKKGMAKNTYGTGCFLTVNIGKEPIINHERLLTSIAWGRKKTVTYVLEGSVFIGGAVIQWLRDGLEFFRKSSDAESLASSASDNGGVYFVPAFVGLGAPHWDSYARGTIIGITRGSTKAHITRAALESIAFQSFDILNTMKKSIPNFEIKELRVDGGASQNNLLMQFQADLLECKVVRPKITETTALGAAYLAGLASGYWQSAEEIISLWQVDKIFEPSMPKNQKEKLLENWNRAIERSKSWIQNSNSL.

Residue Thr-11 coordinates ADP. ATP is bound by residues Thr-11, Thr-12, and Ser-13. Thr-11 is a binding site for sn-glycerol 3-phosphate. ADP is bound at residue Arg-15. Residues Arg-81, Glu-82, Tyr-133, and Asp-242 each coordinate sn-glycerol 3-phosphate. Residues Arg-81, Glu-82, Tyr-133, Asp-242, and Gln-243 each contribute to the glycerol site. ADP is bound by residues Thr-264 and Gly-307. Residues Thr-264, Gly-307, Gln-311, and Gly-409 each contribute to the ATP site. Residues Gly-409 and Asn-413 each contribute to the ADP site.

It belongs to the FGGY kinase family.

It catalyses the reaction glycerol + ATP = sn-glycerol 3-phosphate + ADP + H(+). The protein operates within polyol metabolism; glycerol degradation via glycerol kinase pathway; sn-glycerol 3-phosphate from glycerol: step 1/1. Its activity is regulated as follows. Inhibited by fructose 1,6-bisphosphate (FBP). In terms of biological role, key enzyme in the regulation of glycerol uptake and metabolism. Catalyzes the phosphorylation of glycerol to yield sn-glycerol 3-phosphate. In Borrelia garinii subsp. bavariensis (strain ATCC BAA-2496 / DSM 23469 / PBi) (Borreliella bavariensis), this protein is Glycerol kinase.